Consider the following 215-residue polypeptide: Pyrrolidone-carboxylate peptidase (215 aa).

Catalysis depends on residues Glu80, Cys143, and His167.

It belongs to the peptidase C15 family. In terms of assembly, homotetramer.

The protein localises to the cytoplasm. The catalysed reaction is Release of an N-terminal pyroglutamyl group from a polypeptide, the second amino acid generally not being Pro.. Its function is as follows. Removes 5-oxoproline from various penultimate amino acid residues except L-proline. This chain is Pyrrolidone-carboxylate peptidase, found in Bacillus cereus (strain AH820).